Reading from the N-terminus, the 192-residue chain is Fe/S biogenesis protein NfuA (192 aa).

Residues Cys149 and Cys152 each coordinate [4Fe-4S] cluster.

Belongs to the NfuA family. As to quaternary structure, homodimer. The cofactor is [4Fe-4S] cluster.

Its function is as follows. Involved in iron-sulfur cluster biogenesis. Binds a 4Fe-4S cluster, can transfer this cluster to apoproteins, and thereby intervenes in the maturation of Fe/S proteins. Could also act as a scaffold/chaperone for damaged Fe/S proteins. The protein is Fe/S biogenesis protein NfuA of Colwellia psychrerythraea (strain 34H / ATCC BAA-681) (Vibrio psychroerythus).